Reading from the N-terminus, the 76-residue chain is DNA-directed RNA polymerase subunit epsilon (76 aa).

Belongs to the RNA polymerase subunit epsilon family. In terms of assembly, RNAP is composed of a core of 2 alpha, a beta and a beta' subunit. The core is associated with a delta subunit, and at least one of epsilon or omega. When a sigma factor is associated with the core the holoenzyme is formed, which can initiate transcription.

It carries out the reaction RNA(n) + a ribonucleoside 5'-triphosphate = RNA(n+1) + diphosphate. Functionally, a non-essential component of RNA polymerase (RNAP). This Lactococcus lactis subsp. cremoris (strain MG1363) protein is DNA-directed RNA polymerase subunit epsilon.